We begin with the raw amino-acid sequence, 571 residues long: Proline--tRNA ligase (571 aa).

Belongs to the class-II aminoacyl-tRNA synthetase family. ProS type 1 subfamily. As to quaternary structure, homodimer.

It localises to the cytoplasm. The catalysed reaction is tRNA(Pro) + L-proline + ATP = L-prolyl-tRNA(Pro) + AMP + diphosphate. Its function is as follows. Catalyzes the attachment of proline to tRNA(Pro) in a two-step reaction: proline is first activated by ATP to form Pro-AMP and then transferred to the acceptor end of tRNA(Pro). As ProRS can inadvertently accommodate and process non-cognate amino acids such as alanine and cysteine, to avoid such errors it has two additional distinct editing activities against alanine. One activity is designated as 'pretransfer' editing and involves the tRNA(Pro)-independent hydrolysis of activated Ala-AMP. The other activity is designated 'posttransfer' editing and involves deacylation of mischarged Ala-tRNA(Pro). The misacylated Cys-tRNA(Pro) is not edited by ProRS. This is Proline--tRNA ligase from Pseudomonas fluorescens (strain ATCC BAA-477 / NRRL B-23932 / Pf-5).